The following is a 181-amino-acid chain: METVDTVVWALWAMLPAYIPNNAAVLAGGGRPIDGGRTWGGRRVLGDGKTWRGTLIGTAAGTALALGLTQVTPSVSAALGTDLPTFSLRAGLGLAFGAMLGDIGASFLKRRTGRERGAAFPGLDQLDFVVGALLCAFVAAPSWFTETFTLPVLVVVVVATPVLHVVTNGIAYLLGLKNEPW.

5 consecutive transmembrane segments (helical) span residues 7-27, 55-75, 88-108, 126-146, and 147-167; these read VVWA…AVLA, LIGT…TPSV, LRAG…ASFL, LDFV…WFTE, and TFTL…HVVT.

It belongs to the CDP-archaeol synthase family. Requires Mg(2+) as cofactor.

The protein localises to the cell membrane. It catalyses the reaction 2,3-bis-O-(geranylgeranyl)-sn-glycerol 1-phosphate + CTP + H(+) = CDP-2,3-bis-O-(geranylgeranyl)-sn-glycerol + diphosphate. The protein operates within membrane lipid metabolism; glycerophospholipid metabolism. In terms of biological role, catalyzes the formation of CDP-2,3-bis-(O-geranylgeranyl)-sn-glycerol (CDP-archaeol) from 2,3-bis-(O-geranylgeranyl)-sn-glycerol 1-phosphate (DGGGP) and CTP. This reaction is the third ether-bond-formation step in the biosynthesis of archaeal membrane lipids. The polypeptide is CDP-archaeol synthase (Haloarcula marismortui (strain ATCC 43049 / DSM 3752 / JCM 8966 / VKM B-1809) (Halobacterium marismortui)).